Reading from the N-terminus, the 341-residue chain is Protein pelota homolog (341 aa).

The protein belongs to the eukaryotic release factor 1 family. Pelota subfamily. Monomer. The cofactor is a divalent metal cation.

The protein localises to the cytoplasm. In terms of biological role, may function in recognizing stalled ribosomes, interact with stem-loop structures in stalled mRNA molecules, and effect endonucleolytic cleavage of the mRNA. May play a role in the release non-functional ribosomes and degradation of damaged mRNAs. Has endoribonuclease activity. The protein is Protein pelota homolog of Sulfurisphaera tokodaii (strain DSM 16993 / JCM 10545 / NBRC 100140 / 7) (Sulfolobus tokodaii).